Here is a 951-residue protein sequence, read N- to C-terminus: Glycine dehydrogenase (decarboxylating) (951 aa).

An N6-(pyridoxal phosphate)lysine modification is found at lysine 709.

The protein belongs to the GcvP family. As to quaternary structure, the glycine cleavage system is composed of four proteins: P, T, L and H. It depends on pyridoxal 5'-phosphate as a cofactor.

The catalysed reaction is N(6)-[(R)-lipoyl]-L-lysyl-[glycine-cleavage complex H protein] + glycine + H(+) = N(6)-[(R)-S(8)-aminomethyldihydrolipoyl]-L-lysyl-[glycine-cleavage complex H protein] + CO2. Functionally, the glycine cleavage system catalyzes the degradation of glycine. The P protein binds the alpha-amino group of glycine through its pyridoxal phosphate cofactor; CO(2) is released and the remaining methylamine moiety is then transferred to the lipoamide cofactor of the H protein. This chain is Glycine dehydrogenase (decarboxylating), found in Gluconobacter oxydans (strain 621H) (Gluconobacter suboxydans).